The following is a 420-amino-acid chain: E3 ubiquitin-protein ligase pellino homolog 2 (420 aa).

The FHA; atypical domain maps to 15–202 (EPVKYGELVV…MHPRGGFTEE (188 aa)).

Belongs to the pellino family. In terms of assembly, interacts with TRAF6, IRAK1, IRAK4 and MAP3K7. Interacts with BCL10; this interaction is impaired by SOCS3. Post-translationally, phosphorylated by IRAK1 and IRAK4 enhancing its E3 ligase activity.

The catalysed reaction is S-ubiquitinyl-[E2 ubiquitin-conjugating enzyme]-L-cysteine + [acceptor protein]-L-lysine = [E2 ubiquitin-conjugating enzyme]-L-cysteine + N(6)-ubiquitinyl-[acceptor protein]-L-lysine.. The protein operates within protein modification; protein ubiquitination. In terms of biological role, E3 ubiquitin ligase catalyzing the covalent attachment of ubiquitin moieties onto substrate proteins. Involved in the TLR and IL-1 signaling pathways via interaction with the complex containing IRAK kinases and TRAF6. Mediates IL1B-induced IRAK1 'Lys-63'-linked polyubiquitination and possibly 'Lys-48'-linked ubiquitination. May be important for LPS- and IL1B-induced MAP3K7-dependent, but not MAP3K3-dependent, NF-kappa-B activation. Can activate the MAP (mitogen activated protein) kinase pathway leading to activation of ELK1. The polypeptide is E3 ubiquitin-protein ligase pellino homolog 2 (PELI2) (Homo sapiens (Human)).